Reading from the N-terminus, the 363-residue chain is 3-dehydroquinate synthase (363 aa).

NAD(+) is bound by residues G109–D113, T133–T134, K146, and K155. Zn(2+) is bound by residues E188, H251, and H267.

Belongs to the sugar phosphate cyclases superfamily. Dehydroquinate synthase family. It depends on NAD(+) as a cofactor. Co(2+) is required as a cofactor. Requires Zn(2+) as cofactor.

The protein resides in the cytoplasm. The enzyme catalyses 7-phospho-2-dehydro-3-deoxy-D-arabino-heptonate = 3-dehydroquinate + phosphate. It participates in metabolic intermediate biosynthesis; chorismate biosynthesis; chorismate from D-erythrose 4-phosphate and phosphoenolpyruvate: step 2/7. Catalyzes the conversion of 3-deoxy-D-arabino-heptulosonate 7-phosphate (DAHP) to dehydroquinate (DHQ). The polypeptide is 3-dehydroquinate synthase (Streptomyces avermitilis (strain ATCC 31267 / DSM 46492 / JCM 5070 / NBRC 14893 / NCIMB 12804 / NRRL 8165 / MA-4680)).